A 264-amino-acid polypeptide reads, in one-letter code: ATP synthase subunit b 1 (264 aa).

The chain crosses the membrane as a helical span at residues 2–22 (LFDWFTFWAQLLNFLILVWLL). The segment at 240-264 (ASSALLDGPDDEMNEEEGHAGKDAD) is disordered. A compositionally biased stretch (basic and acidic residues) spans 255–264 (EEGHAGKDAD).

Belongs to the ATPase B chain family. F-type ATPases have 2 components, F(1) - the catalytic core - and F(0) - the membrane proton channel. F(1) has five subunits: alpha(3), beta(3), gamma(1), delta(1), epsilon(1). F(0) has four main subunits: a(1), b(2) and c(10-14). The alpha and beta chains form an alternating ring which encloses part of the gamma chain. F(1) is attached to F(0) by a central stalk formed by the gamma and epsilon chains, while a peripheral stalk is formed by the delta and b chains.

It is found in the cell inner membrane. Functionally, f(1)F(0) ATP synthase produces ATP from ADP in the presence of a proton or sodium gradient. F-type ATPases consist of two structural domains, F(1) containing the extramembraneous catalytic core and F(0) containing the membrane proton channel, linked together by a central stalk and a peripheral stalk. During catalysis, ATP synthesis in the catalytic domain of F(1) is coupled via a rotary mechanism of the central stalk subunits to proton translocation. In terms of biological role, component of the F(0) channel, it forms part of the peripheral stalk, linking F(1) to F(0). This chain is ATP synthase subunit b 1, found in Chlorobium luteolum (strain DSM 273 / BCRC 81028 / 2530) (Pelodictyon luteolum).